The chain runs to 418 residues: 3-phosphoshikimate 1-carboxyvinyltransferase (418 aa).

Residues Lys26, Ser27, and Arg31 each coordinate 3-phosphoshikimate. Position 26 (Lys26) interacts with phosphoenolpyruvate. Phosphoenolpyruvate is bound by residues Gly97 and Arg125. Ser170, Ser171, Gln172, Asp297, Asn320, and Lys324 together coordinate 3-phosphoshikimate. A phosphoenolpyruvate-binding site is contributed by Gln172. Asp297 acts as the Proton acceptor in catalysis. Phosphoenolpyruvate contacts are provided by Arg328, Arg375, and Lys400.

This sequence belongs to the EPSP synthase family. Monomer.

It is found in the cytoplasm. The catalysed reaction is 3-phosphoshikimate + phosphoenolpyruvate = 5-O-(1-carboxyvinyl)-3-phosphoshikimate + phosphate. The protein operates within metabolic intermediate biosynthesis; chorismate biosynthesis; chorismate from D-erythrose 4-phosphate and phosphoenolpyruvate: step 6/7. In terms of biological role, catalyzes the transfer of the enolpyruvyl moiety of phosphoenolpyruvate (PEP) to the 5-hydroxyl of shikimate-3-phosphate (S3P) to produce enolpyruvyl shikimate-3-phosphate and inorganic phosphate. This is 3-phosphoshikimate 1-carboxyvinyltransferase from Pseudomonas syringae pv. syringae (strain B728a).